We begin with the raw amino-acid sequence, 282 residues long: WRKY transcription factor 71 (282 aa).

A disordered region spans residues 63–121 (LTSNSPVVSSSSNEGEPKENTNDKSDQMEDNEGDLHGVGESSKQLTKQGKKKGEKKERE). Positions 65–75 (SNSPVVSSSSN) are enriched in low complexity. Positions 77–99 (GEPKENTNDKSDQMEDNEGDLHG) are enriched in basic and acidic residues. Residues 130-195 (SEIDHLEDGY…YEGKHNHPIP (66 aa)) constitute a DNA-binding region (WRKY).

This sequence belongs to the WRKY group II-c family.

Its subcellular location is the nucleus. Transcription factor. Interacts specifically with the W box (5'-(T)TGAC[CT]-3'), a frequently occurring elicitor-responsive cis-acting element. This chain is WRKY transcription factor 71 (WRKY71), found in Arabidopsis thaliana (Mouse-ear cress).